The following is a 435-amino-acid chain: MADDDTTARRPVLSSFGTLGRGWLGVLALLLVIGLGAWAYQLQHGLIETGMRNVFSWGLYIMLFVLFVGLSAGGLILSSAPKFFHSQRYEGFARLGVLVSLGCIIVAGLLILPDIGRPDRIYQFVTSPDFRSPMVWDFGIVMLYGALNVWYLWLLTRRDLAARGSRLSLWVSDSAAGRDRDRTLMFWTAVCALPAAVALHSVTGWIFATQVGRGDWFSPLVAPVFIAKALVSGLGLLLVVSILADRFTAFTADRGELTSLGKLLGIFLAFHVVYLLAAERLPHAWAHHFGFWAITSNFLIGDTVYFWLWTGLGGAVPLLLLATPSLRRRTAVIFTASVLAVFGTLFEGIRLVFTGYQRVNINAAPGIATGGEYAGLTTDAWATAGTYTPTAVEIAVTVGVISIGALIVMAGLRYLPLQRAAPDAAYATDGGDRTQ.

The next 11 membrane-spanning stretches (helical) occupy residues 22-42, 57-77, 95-115, 135-155, 186-206, 220-240, 257-277, 281-301, 304-324, 333-353, and 392-412; these read GWLG…AYQL, WGLY…GLIL, LGVL…LPDI, VWDF…LWLL, FWTA…TGWI, LVAP…LLVV, LTSL…YLLA, LPHA…FLIG, VYFW…LATP, IFTA…RLVF, and VEIA…MAGL.

It belongs to the NrfD family. As to quaternary structure, probable multiprotein complex that likely consists of DmsA, DmsB and DmsC.

Its subcellular location is the cell membrane. In terms of biological role, dimethyl sulfoxide (DMSO) reductase catalyzes the reduction of dimethyl sulfoxide (DMSO) to dimethyl sulfide (DMS) during anaerobic respiration; it can also use trimethylamine N-oxide (TMAO) as terminal electron acceptor. Subunit C is proposed to be a membrane anchoring subunit. This chain is Putative dimethyl sulfoxide reductase membrane subunit C (dmsC), found in Halobacterium salinarum (strain ATCC 700922 / JCM 11081 / NRC-1) (Halobacterium halobium).